An 807-amino-acid chain; its full sequence is Mechanosensitive cation channel TMEM63A (807 aa).

Residues 1–51 (MTDSPFLELWQSRAVSVREQLGLGDRPNDSYCYNSAKNSTVLQGVTFGGIP) lie on the Extracellular side of the membrane. Residue N38 is glycosylated (N-linked (GlcNAc...) asparagine). A helical transmembrane segment spans residues 52 to 74 (TVLLIDVSCFLFLILVFSIIRRR). The Cytoplasmic segment spans residues 75 to 134 (FWDYGRIALVSEADSEPRFQRLSSTSSSGQQDFENELGCCPWLTAIFRLHDDQILEWCGE). Residues 135–167 (DAIHYLSFQRHIIFLLVVVSFLSLCVILPVNLS) traverse the membrane as a helical segment. Over 168-191 (GDLLDKDPYSFGRTTIANLQTDND) the chain is Extracellular. A helical membrane pass occupies residues 192–217 (LLWLHTIFAVIYLFLTVGFMRHHTQS). At 218-416 (IKYKEENLVR…CWKNLSIQGL (199 aa)) the chain is on the cytoplasmic side. Residues 219-414 (KYKEENLVRR…DICWKNLSIQ (196 aa)) form an intracellular linker IL2; confers mechanosensitivity region. Residues 417-444 (RWWLQWLGINFTLFLGLFFLTTPSIILS) form a helical membrane-spanning segment. At 445–462 (TMDKFNVTKPIHALNNPI) the chain is on the extracellular side. N450 carries an N-linked (GlcNAc...) asparagine glycan. Residues 463 to 490 (ISQFFPTLLLWSFSALLPSIVYYSTLLE) traverse the membrane as a helical segment. Residues 491-495 (SHWTK) are Cytoplasmic-facing. The chain crosses the membrane as a helical span at residues 496–532 (SGENQIMMTKVYIFLIFMVLILPSLGLTSLDFFFRWL). The Extracellular segment spans residues 533 to 554 (FDKTSSEASIRLECVFLPDQGA). A helical membrane pass occupies residues 555-586 (FFVNYVIASAFIGNGMELLRLPGLILYTFRMI). The gating helix stretch occupies residues 555 to 586 (FFVNYVIASAFIGNGMELLRLPGLILYTFRMI). Topologically, residues 587–606 (MAKTAADRRNVKQNQAFQYE) are cytoplasmic. Residues 607–624 (FGAMYAWMLCVFTVIMAY) form a helical membrane-spanning segment. The Extracellular portion of the chain corresponds to 625–628 (SITC). The helical transmembrane segment at 629–651 (PIIAPFGLIYILLKHMVDRHNLY) threads the bilayer. At 652–661 (FIYLPAKLEK) the chain is on the cytoplasmic side. Residues 662–689 (GIHFAAVNQALAAPILCLFWLYFFSFLR) traverse the membrane as a helical segment. Over 690-694 (LGMKA) the chain is Extracellular. A helical transmembrane segment spans residues 695 to 709 (PATLFTFLVVLLTIL). Topologically, residues 710-807 (VCLAHTCFGY…GSVAAAPQEA (98 aa)) are cytoplasmic. S739 bears the Phosphoserine mark.

The protein belongs to the CSC1 (TC 1.A.17) family. Monomer. N-Glycosylated.

It is found in the lysosome membrane. It localises to the early endosome membrane. The protein resides in the cell membrane. It carries out the reaction Ca(2+)(in) = Ca(2+)(out). Its function is as follows. Mechanosensitive cation channel with low conductance and high activation threshold. In contrast to TMEM63B, does not show phospholipid scramblase activity. Acts as a regulator of lysosomal morphology by mediating lysosomal mechanosensitivity. Important for the baby's first breath and respiration throughout life. Upon lung inflation conducts cation currents in alveolar type 1 and 2 cells triggering lamellar body exocytosis and surfactant secretion into airspace. Also acts as an osmosensitive cation channel preferentially activated by hypotonic stress. This is Mechanosensitive cation channel TMEM63A (TMEM63A) from Pongo abelii (Sumatran orangutan).